The chain runs to 480 residues: UDP-glucose 6-dehydrogenase 2 (480 aa).

NAD(+) is bound by residues 8–13, aspartate 33, arginine 38, 86–90, 127–128, and glutamate 161; these read GAGYVG, VNTPT, and ST. Substrate-binding positions include 157–161, 216–223, and 256–269; these read EFLAE, KLAANAFL, and RIGP…VGFG. Cysteine 272 functions as the Nucleophile in the catalytic mechanism. 272 to 275 lines the NAD(+) pocket; that stretch reads CFQK. A substrate-binding site is contributed by 334-335; the sequence is FK. An NAD(+)-binding site is contributed by arginine 342. Residue arginine 447 participates in substrate binding.

It belongs to the UDP-glucose/GDP-mannose dehydrogenase family. Preferentially expressed in roots.

It carries out the reaction UDP-alpha-D-glucose + 2 NAD(+) + H2O = UDP-alpha-D-glucuronate + 2 NADH + 3 H(+). The protein operates within nucleotide-sugar biosynthesis; UDP-alpha-D-glucuronate biosynthesis; UDP-alpha-D-glucuronate from UDP-alpha-D-glucose: step 1/1. Its activity is regulated as follows. Inhibited by UDP-xylose. Involved in the biosynthesis of UDP-glucuronic acid (UDP-GlcA), providing nucleotide sugars for cell-wall polymers. Required for the formation of cell wall ingrowths on the outer cell walls of nematode-induced syncytia. The polypeptide is UDP-glucose 6-dehydrogenase 2 (UGD2) (Arabidopsis thaliana (Mouse-ear cress)).